Here is a 1070-residue protein sequence, read N- to C-terminus: Probable arabinosyltransferase C (1070 aa).

The next 12 membrane-spanning stretches (helical) occupy residues I10–L32, L210–L232, S247–V269, V399–G421, I425–L442, F449–R471, S512–L534, S547–T564, V574–R596, V603–V625, T645–V664, and S685–I707.

This sequence belongs to the emb family.

The protein resides in the cell membrane. Arabinosyl transferase responsible for the polymerization of arabinose into the arabinan of arabinogalactan. The sequence is that of Probable arabinosyltransferase C (embC) from Mycobacterium leprae (strain TN).